A 530-amino-acid chain; its full sequence is NMDA receptor synaptonuclear signaling and neuronal migration factor (530 aa).

Gly2 is lipidated: N-myristoyl glycine. The segment at 2 to 233 (GAAASRRRAL…FSFQTATTTM (232 aa)) is necessary and sufficient to elicit dendritic processes and synaptic contacts. Disordered regions lie at residues 34 to 67 (SQSHPENRNGADHLLADAYSGHDGSPEMQPAPQN) and 125 to 197 (KGRR…GRRK). Positions 38–48 (PENRNGADHLL) are enriched in basic and acidic residues. Residues 125–137 (KGRRQRHPHHHSQ) show a composition bias toward basic residues. Residues 153-162 (PCQSWAGSRQ) are compositionally biased toward polar residues. Position 204 is a phosphoserine (Ser204). The short motif at 247–250 (RRKR) is the Nuclear localization signal element. The disordered stretch occupies residues 285–312 (RSFSRSWSDPTPMKADTSHDSRDSSDLQ). Phosphoserine is present on residues Ser290 and Ser292. Positions 300–309 (DTSHDSRDSS) are enriched in basic and acidic residues.

Belongs to the NSMF family. Interacts with KPNA1; the interaction occurs in a calcium-independent manner after synaptic NMDA receptor stimulation and is required for nuclear import of NSMF but is competed by CABP1. Interacts (via the central NLS-containing motif region) with CABP1 (via EF-hands 1 and 2); the interaction occurs in a calcium-dependent manner after synaptic NMDA receptor stimulation and prevents the nuclear import of NSMF. Cannot be competed by calmodulin. In terms of processing, proteolytically processed after NMDA receptor activation. Cleaved in a calcium-dependent and calpain-sensitive manner. Calpain cleavage is essential for the translocation process from dendrites to the nucleus. As to expression, highly expressed in adult and fetal brain. Weakly expressed in heart, liver, spleen, testis, small intestine, skeletal muscle, peripheral white blood cells and kidney.

It localises to the nucleus. The protein resides in the nucleus envelope. It is found in the nucleus membrane. Its subcellular location is the nucleus matrix. The protein localises to the cytoplasm. It localises to the cell cortex. The protein resides in the cytoskeleton. It is found in the cell membrane. Its subcellular location is the cell projection. The protein localises to the dendrite. It localises to the synapse. The protein resides in the synaptosome. It is found in the postsynaptic density. Its subcellular location is the membrane. Functionally, couples NMDA-sensitive glutamate receptor signaling to the nucleus and triggers long-lasting changes in the cytoarchitecture of dendrites and spine synapse processes. Part of the cAMP response element-binding protein (CREB) shut-off signaling pathway. Stimulates outgrowth of olfactory axons and migration of gonadotropin-releasing hormone (GnRH) and luteinizing-hormone-releasing hormone (LHRH) neuronal cells. This chain is NMDA receptor synaptonuclear signaling and neuronal migration factor (NSMF), found in Homo sapiens (Human).